We begin with the raw amino-acid sequence, 345 residues long: Protein D345L (345 aa).

It belongs to the asfivirus D345L family. In terms of assembly, interacts with IKKA/CHUK and IKBKB.

It is found in the host cytoplasm. Plays a role in the negative regulation of host NF-kappa-B signaling pathway. Mechanistically, recruits host IKKA/CHUK and IKBKB to suppress their kinase activity towards NFKBIA. The sequence is that of Protein D345L from African swine fever virus (strain Badajoz 1971 Vero-adapted) (Ba71V).